The chain runs to 225 residues: 3-dehydroquinate dehydratase (225 aa).

3-dehydroquinate is bound by residues Ser-6, 30-32, and Arg-62; that span reads EWR. The active-site Proton donor/acceptor is the His-118. Lys-143 (schiff-base intermediate with substrate) is an active-site residue. Residues Arg-186, Ser-205, and Gln-209 each contribute to the 3-dehydroquinate site.

This sequence belongs to the type-I 3-dehydroquinase family. In terms of assembly, homodimer.

The enzyme catalyses 3-dehydroquinate = 3-dehydroshikimate + H2O. The protein operates within metabolic intermediate biosynthesis; chorismate biosynthesis; chorismate from D-erythrose 4-phosphate and phosphoenolpyruvate: step 3/7. Functionally, involved in the third step of the chorismate pathway, which leads to the biosynthesis of aromatic amino acids. Catalyzes the cis-dehydration of 3-dehydroquinate (DHQ) and introduces the first double bond of the aromatic ring to yield 3-dehydroshikimate. This Streptococcus pneumoniae (strain P1031) protein is 3-dehydroquinate dehydratase.